The chain runs to 214 residues: Adenylate kinase (214 aa).

10-15 (GTGKGT) is a binding site for ATP. Residues 30 to 59 (STGDILRENIQKKNTIGKKIHNILKNGELV) form an NMP region. Residues Thr31, Arg36, 57 to 59 (ELV), 85 to 88 (GFPR), and Gln92 contribute to the AMP site. The tract at residues 122 to 159 (GRRVHTPSGRIYNINYNPPREEGKDDLTQEKLTIREDD) is LID. ATP contacts are provided by residues Arg123 and 132 to 133 (IY). 2 residues coordinate AMP: Arg156 and Arg167. Gln200 is a binding site for ATP.

The protein belongs to the adenylate kinase family. As to quaternary structure, monomer.

It is found in the cytoplasm. It catalyses the reaction AMP + ATP = 2 ADP. It participates in purine metabolism; AMP biosynthesis via salvage pathway; AMP from ADP: step 1/1. Catalyzes the reversible transfer of the terminal phosphate group between ATP and AMP. Plays an important role in cellular energy homeostasis and in adenine nucleotide metabolism. The polypeptide is Adenylate kinase (Buchnera aphidicola subsp. Schizaphis graminum (strain Sg)).